A 468-amino-acid polypeptide reads, in one-letter code: ATP synthase subunit beta (468 aa).

155–162 (GGAGVGKT) contributes to the ATP binding site.

This sequence belongs to the ATPase alpha/beta chains family. F-type ATPases have 2 components, CF(1) - the catalytic core - and CF(0) - the membrane proton channel. CF(1) has five subunits: alpha(3), beta(3), gamma(1), delta(1), epsilon(1). CF(0) has three main subunits: a(1), b(2) and c(9-12). The alpha and beta chains form an alternating ring which encloses part of the gamma chain. CF(1) is attached to CF(0) by a central stalk formed by the gamma and epsilon chains, while a peripheral stalk is formed by the delta and b chains.

It localises to the cell membrane. It carries out the reaction ATP + H2O + 4 H(+)(in) = ADP + phosphate + 5 H(+)(out). Its function is as follows. Produces ATP from ADP in the presence of a proton gradient across the membrane. The catalytic sites are hosted primarily by the beta subunits. The polypeptide is ATP synthase subunit beta (Streptococcus gordonii (strain Challis / ATCC 35105 / BCRC 15272 / CH1 / DL1 / V288)).